Here is a 40-residue protein sequence, read N- to C-terminus: Accessory gland-specific peptide 57Db (40 aa).

The N-terminal stretch at 1-17 (MKITSALVLLFAGVAFA) is a signal peptide.

As to expression, lumen fluid of male accessory glands, becomes seminal fluid.

Its subcellular location is the secreted. Transferred from male to female during mating and may affect egglaying and behavior after mating. The chain is Accessory gland-specific peptide 57Db (Mst57Db) from Drosophila melanogaster (Fruit fly).